A 198-amino-acid polypeptide reads, in one-letter code: T-cell surface glycoprotein CD3 epsilon chain (198 aa).

The signal sequence occupies residues 1–21; the sequence is MQSGTRWRVLGLCLLSIGVWG. Residues 22–117 are Extracellular-facing; that stretch reads QDGNEEMGSI…RVCENCMEMD (96 aa). Residues 37-107 enclose the Ig-like domain; it reads QVSISGTTVI…DASHHLYLKA (71 aa). Cys49 and Cys89 are oxidised to a cystine. Residues 118–138 traverse the membrane as a helical segment; the sequence is VMAVATIVIVDICITLGLLLL. Over 139–198 the chain is Cytoplasmic; that stretch reads VYYWSKNRKAKAKPVTRGAGAGGRQRGQNKERPPPVPNPDYEPIRKGQQDLYSGLNQRRI. The tract at residues 152–198 is disordered; it reads PVTRGAGAGGRQRGQNKERPPPVPNPDYEPIRKGQQDLYSGLNQRRI. Positions 166–183 are NUMB-binding region; it reads QNKERPPPVPNPDYEPIR. One can recognise an ITAM domain in the interval 169 to 196; sequence ERPPPVPNPDYEPIRKGQQDLYSGLNQR. A proline-rich sequence region spans residues 170–177; sequence RPPPVPNP. 2 positions are modified to phosphotyrosine: Tyr179 and Tyr190. The segment covering 188-198 has biased composition (polar residues); that stretch reads DLYSGLNQRRI.

In terms of assembly, the TCR-CD3 complex is composed of a CD3D/CD3E and a CD3G/CD3E heterodimers that preferentially associate with TCRalpha and TCRbeta, respectively, to form TCRalpha/CD3E/CD3G and TCRbeta/CD3G/CD3E trimers. In turn, the hexamer interacts with CD3Z homodimer to form the TCR-CD3 complex. Alternatively, TCRalpha and TCRbeta can be replaced by TCRgamma and TCRdelta. Interacts with CD6. Interacts (via Proline-rich sequence) with NCK1; the interaction is ligand dependent but independent of tyrosine kinase activation. Phosphorylated on Tyr residues after T-cell receptor triggering by LCK in association with CD4/CD8.

The protein resides in the cell membrane. Functionally, part of the TCR-CD3 complex present on T-lymphocyte cell surface that plays an essential role in adaptive immune response. When antigen presenting cells (APCs) activate T-cell receptor (TCR), TCR-mediated signals are transmitted across the cell membrane by the CD3 chains CD3D, CD3E, CD3G and CD3Z. All CD3 chains contain immunoreceptor tyrosine-based activation motifs (ITAMs) in their cytoplasmic domain. Upon TCR engagement, these motifs become phosphorylated by Src family protein tyrosine kinases LCK and FYN, resulting in the activation of downstream signaling pathways. In addition of this role of signal transduction in T-cell activation, CD3E plays an essential role in correct T-cell development. Also participates in internalization and cell surface down-regulation of TCR-CD3 complexes via endocytosis sequences present in CD3E cytosolic region. In addition to its role as a TCR coreceptor, it serves as a receptor for ITPRIPL1. Ligand recognition inhibits T-cell activation by promoting interaction with NCK1, which prevents CD3E-ZAP70 interaction and blocks the ERK-NFkB signaling cascade and calcium influx. This chain is T-cell surface glycoprotein CD3 epsilon chain (CD3E), found in Macaca fascicularis (Crab-eating macaque).